The chain runs to 563 residues: Kdo(2)-lipid A phosphoethanolamine 7''-transferase (563 aa).

At 1–9 (MRYIKSMTQ) the chain is on the cytoplasmic side. Residues 10–30 (QKLSFLLALYIGLFMNCAVFY) form a helical membrane-spanning segment. The Periplasmic portion of the chain corresponds to 31 to 48 (RRFGSYAQEFTIWKGLSA). Residues 49–69 (VVELGATVLVTFFLLRLLSLF) form a helical membrane-spanning segment. At 70-79 (GRRVWRVLAT) the chain is on the cytoplasmic side. The chain crosses the membrane as a helical span at residues 80–100 (LVVLFSAGASYYMTFLNVVIG). The Periplasmic segment spans residues 101-117 (YGIIASVMTTDIDLSKE). The chain crosses the membrane as a helical span at residues 118 to 138 (VVGLHFVLWLIAVSVLPLIFI). The Cytoplasmic segment spans residues 139–159 (WSNHCRYTLLRQLRTPGQRFR). A helical transmembrane segment spans residues 160-180 (SAAVVVLAGVMVWAPIRLLDI). Topologically, residues 181–563 (QQKKVERATG…IPDVQKVAAK (383 aa)) are periplasmic.

It belongs to the phosphoethanolamine transferase family. EptB subfamily. The cofactor is Ca(2+).

It localises to the cell inner membrane. The enzyme catalyses alpha-Kdo-(2-&gt;4)-alpha-Kdo-(2-&gt;6)-lipid A (E. coli) + a 1,2-diacyl-sn-glycero-3-phosphoethanolamine = 7-O-[2-aminoethoxy(hydroxy)phosphoryl]-alpha-Kdo-(2-&gt;4)-alpha-Kdo-(2-&gt;6)-lipid A + a 1,2-diacyl-sn-glycerol. It carries out the reaction alpha-Kdo-(2-&gt;4)-alpha-Kdo-(2-&gt;6)-lipid IVA (E. coli) + a 1,2-diacyl-sn-glycero-3-phosphoethanolamine = 7-O-[2-aminoethoxy(hydroxy)phosphoryl]-alpha-Kdo-(2-&gt;4)-alpha-Kdo-(2-&gt;6)-lipid IVA (E. coli) + a 1,2-diacyl-sn-glycerol. In terms of biological role, catalyzes the addition of a phosphoethanolamine (pEtN) moiety to the outer 3-deoxy-D-manno-octulosonic acid (Kdo) residue of a Kdo(2)-lipid A. Phosphatidylethanolamines with one unsaturated acyl group function as pEtN donors and the reaction releases diacylglycerol. This chain is Kdo(2)-lipid A phosphoethanolamine 7''-transferase (eptB), found in Salmonella typhimurium (strain LT2 / SGSC1412 / ATCC 700720).